The chain runs to 547 residues: Mercuric reductase (547 aa).

Residues Ala5 to His70 form the HMA domain. Positions 16 and 19 each coordinate a metal cation. FAD-binding residues include Ala96 and Thr121. Residues Cys122 and Cys127 are joined by a disulfide bond. Lys131, Ala197, Asp389, and Val397 together coordinate FAD. Cys544 and Cys545 together coordinate Hg(2+).

The protein belongs to the class-I pyridine nucleotide-disulfide oxidoreductase family. As to quaternary structure, homodimer. The cofactor is FAD.

It catalyses the reaction Hg + NADP(+) + H(+) = Hg(2+) + NADPH. Resistance to Hg(2+) in bacteria appears to be governed by a specialized system which includes mercuric reductase. MerA protein is responsible for volatilizing mercury as Hg(0). In Acidithiobacillus ferrooxidans (Thiobacillus ferrooxidans), this protein is Mercuric reductase (merA).